Reading from the N-terminus, the 851-residue chain is Beta-galactosidase BoGH2A (851 aa).

The signal sequence occupies residues 1–19; that stretch reads MMIGKLKYLMLGGCLILGS. C20 carries the N-palmitoyl cysteine lipid modification. C20 carries the S-diacylglycerol cysteine lipid modification. The active-site Proton donor is the E437. E544 functions as the Nucleophile in the catalytic mechanism.

The protein belongs to the glycosyl hydrolase 2 family.

The protein resides in the cell inner membrane. It catalyses the reaction Hydrolysis of terminal non-reducing beta-D-galactose residues in beta-D-galactosides.. It participates in glucan metabolism; xyloglucan degradation. Functionally, catalyzes the hydrolysis of terminal non-reducing beta-D-galactose residues in beta-D-galactosides in xyloglucan degradation, converting 'L' units to 'X' units. This chain is Beta-galactosidase BoGH2A, found in Bacteroides ovatus (strain ATCC 8483 / DSM 1896 / JCM 5824 / BCRC 10623 / CCUG 4943 / NCTC 11153).